We begin with the raw amino-acid sequence, 255 residues long: uncharacterized protein (255 aa).

An N-terminal signal peptide occupies residues 1–23 (MKRLNTLVLYISFLILIISIVAG). Cys24 is lipidated: N-palmitoyl cysteine. A lipid anchor (S-diacylglycerol cysteine) is attached at Cys24.

It belongs to the staphylococcal tandem lipoprotein family.

It localises to the cell membrane. This is an uncharacterized protein from Staphylococcus aureus (strain N315).